Consider the following 220-residue polypeptide: Small ribosomal subunit protein uS3 (220 aa).

The 69-residue stretch at 39-107 (IREHVEGRLK…RVHINISEIK (69 aa)) folds into the KH type-2 domain.

Belongs to the universal ribosomal protein uS3 family. Part of the 30S ribosomal subunit. Forms a tight complex with proteins S10 and S14.

Functionally, binds the lower part of the 30S subunit head. Binds mRNA in the 70S ribosome, positioning it for translation. This chain is Small ribosomal subunit protein uS3, found in Shouchella clausii (strain KSM-K16) (Alkalihalobacillus clausii).